The primary structure comprises 310 residues: HPr kinase/phosphorylase (310 aa).

Active-site residues include His-136 and Lys-157. 151 to 158 is an ATP binding site; the sequence is GDSGIGKS. Residue Ser-158 coordinates Mg(2+). Residue Asp-175 is the Proton acceptor; for phosphorylation activity. Proton donor; for dephosphorylation activity of the active site. The segment at 199–208 is important for the catalytic mechanism of both phosphorylation and dephosphorylation; the sequence is LEIRGLGIIN. Glu-200 provides a ligand contact to Mg(2+). Arg-241 is an active-site residue. Positions 262–267 are important for the catalytic mechanism of dephosphorylation; sequence PVRPGR.

It belongs to the HPrK/P family. As to quaternary structure, homohexamer. Mg(2+) is required as a cofactor.

The catalysed reaction is [HPr protein]-L-serine + ATP = [HPr protein]-O-phospho-L-serine + ADP + H(+). It catalyses the reaction [HPr protein]-O-phospho-L-serine + phosphate + H(+) = [HPr protein]-L-serine + diphosphate. Catalyzes the ATP- as well as the pyrophosphate-dependent phosphorylation of a specific serine residue in HPr, a phosphocarrier protein of the phosphoenolpyruvate-dependent sugar phosphotransferase system (PTS). HprK/P also catalyzes the pyrophosphate-producing, inorganic phosphate-dependent dephosphorylation (phosphorolysis) of seryl-phosphorylated HPr (P-Ser-HPr). The two antagonistic activities of HprK/P are regulated by several intracellular metabolites, which change their concentration in response to the absence or presence of rapidly metabolisable carbon sources (glucose, fructose, etc.) in the growth medium. Therefore, by controlling the phosphorylation state of HPr, HPrK/P is a sensor enzyme that plays a major role in the regulation of carbon metabolism and sugar transport: it mediates carbon catabolite repression (CCR), and regulates PTS-catalyzed carbohydrate uptake and inducer exclusion. The polypeptide is HPr kinase/phosphorylase (Staphylococcus epidermidis (strain ATCC 35984 / DSM 28319 / BCRC 17069 / CCUG 31568 / BM 3577 / RP62A)).